A 136-amino-acid chain; its full sequence is UPF0310 protein SMU_442 (136 aa).

It belongs to the UPF0310 family.

In Streptococcus mutans serotype c (strain ATCC 700610 / UA159), this protein is UPF0310 protein SMU_442.